Reading from the N-terminus, the 724-residue chain is Phosphoribosylformylglycinamidine synthase subunit PurL (724 aa).

Residue His-46 is part of the active site. Tyr-49 and Lys-88 together coordinate ATP. Glu-90 provides a ligand contact to Mg(2+). Substrate-binding positions include 91-94 and Arg-113; that span reads SHNH. His-92 acts as the Proton acceptor in catalysis. Asp-114 contacts Mg(2+). Gln-237 is a substrate binding site. Asp-265 lines the Mg(2+) pocket. 309-311 serves as a coordination point for substrate; the sequence is ESQ. The ATP site is built by Asp-489 and Gly-526. Position 527 (Asn-527) interacts with Mg(2+). Position 529 (Ser-529) interacts with substrate.

It belongs to the FGAMS family. Monomer. Part of the FGAM synthase complex composed of 1 PurL, 1 PurQ and 2 PurS subunits.

The protein localises to the cytoplasm. The catalysed reaction is N(2)-formyl-N(1)-(5-phospho-beta-D-ribosyl)glycinamide + L-glutamine + ATP + H2O = 2-formamido-N(1)-(5-O-phospho-beta-D-ribosyl)acetamidine + L-glutamate + ADP + phosphate + H(+). The protein operates within purine metabolism; IMP biosynthesis via de novo pathway; 5-amino-1-(5-phospho-D-ribosyl)imidazole from N(2)-formyl-N(1)-(5-phospho-D-ribosyl)glycinamide: step 1/2. Part of the phosphoribosylformylglycinamidine synthase complex involved in the purines biosynthetic pathway. Catalyzes the ATP-dependent conversion of formylglycinamide ribonucleotide (FGAR) and glutamine to yield formylglycinamidine ribonucleotide (FGAM) and glutamate. The FGAM synthase complex is composed of three subunits. PurQ produces an ammonia molecule by converting glutamine to glutamate. PurL transfers the ammonia molecule to FGAR to form FGAM in an ATP-dependent manner. PurS interacts with PurQ and PurL and is thought to assist in the transfer of the ammonia molecule from PurQ to PurL. The chain is Phosphoribosylformylglycinamidine synthase subunit PurL from Granulibacter bethesdensis (strain ATCC BAA-1260 / CGDNIH1).